The primary structure comprises 692 residues: UvrABC system protein C (692 aa).

Positions 16 to 95 constitute a GIY-YIG domain; the sequence is ETPGVYRFRD…IKEFDPRFNV (80 aa). The UVR domain occupies 208 to 243; sequence GRYLRRLEREMRAAAEAQEYERAARLRDDIGALRRA. Residues 492–511 are disordered; it reads GELEEYPGAPTGDDEAPETG.

It belongs to the UvrC family. As to quaternary structure, interacts with UvrB in an incision complex.

It localises to the cytoplasm. The UvrABC repair system catalyzes the recognition and processing of DNA lesions. UvrC both incises the 5' and 3' sides of the lesion. The N-terminal half is responsible for the 3' incision and the C-terminal half is responsible for the 5' incision. This is UvrABC system protein C from Parafrankia sp. (strain EAN1pec).